Reading from the N-terminus, the 901-residue chain is HTH-type transcriptional regulator MalT (901 aa).

39–46 (SPAGYGKT) is an ATP binding site. Positions 829–894 (ELIRTSPLTQ…AAVQHAQKLL (66 aa)) constitute an HTH luxR-type domain. The H-T-H motif DNA-binding region spans 853–872 (NEQIAGELEVAATTIKTHIR).

It belongs to the MalT family. In terms of assembly, monomer in solution. Oligomerizes to an active state in the presence of the positive effectors ATP and maltotriose.

With respect to regulation, activated by ATP and maltotriose, which are both required for DNA binding. Positively regulates the transcription of the maltose regulon whose gene products are responsible for uptake and catabolism of malto-oligosaccharides. Specifically binds to the promoter region of its target genes, recognizing a short DNA motif called the MalT box. The polypeptide is HTH-type transcriptional regulator MalT (Shigella flexneri serotype 5b (strain 8401)).